A 45-amino-acid polypeptide reads, in one-letter code: C-phycocyanin beta subunit (45 aa).

This sequence belongs to the phycobiliprotein family. Heterodimer of an alpha and a beta subunit. The hererodimer further assembles into trimers and the trimers into hexamers. In terms of processing, contains two covalently linked bilin chromophores.

The protein localises to the cellular thylakoid membrane. In terms of biological role, light-harvesting photosynthetic bile pigment-protein from the phycobiliprotein complex (phycobilisome, PBS). Phycocyanin is the major phycobiliprotein in the PBS rod. The polypeptide is C-phycocyanin beta subunit (cpcB) (Limnospira fusiformis (Arthrospira fusiformis)).